Consider the following 366-residue polypeptide: tRNA 2-selenouridine synthase (366 aa).

Residues F12–H135 enclose the Rhodanese domain. C95 serves as the catalytic S-selanylcysteine intermediate.

This sequence belongs to the SelU family. As to quaternary structure, monomer.

It catalyses the reaction 5-methylaminomethyl-2-thiouridine(34) in tRNA + selenophosphate + (2E)-geranyl diphosphate + H2O + H(+) = 5-methylaminomethyl-2-selenouridine(34) in tRNA + (2E)-thiogeraniol + phosphate + diphosphate. The enzyme catalyses 5-methylaminomethyl-2-thiouridine(34) in tRNA + (2E)-geranyl diphosphate = 5-methylaminomethyl-S-(2E)-geranyl-thiouridine(34) in tRNA + diphosphate. It carries out the reaction 5-methylaminomethyl-S-(2E)-geranyl-thiouridine(34) in tRNA + selenophosphate + H(+) = 5-methylaminomethyl-2-(Se-phospho)selenouridine(34) in tRNA + (2E)-thiogeraniol. The catalysed reaction is 5-methylaminomethyl-2-(Se-phospho)selenouridine(34) in tRNA + H2O = 5-methylaminomethyl-2-selenouridine(34) in tRNA + phosphate. Functionally, involved in the post-transcriptional modification of the uridine at the wobble position (U34) of tRNA(Lys), tRNA(Glu) and tRNA(Gln). Catalyzes the conversion of 2-thiouridine (S2U-RNA) to 2-selenouridine (Se2U-RNA). Acts in a two-step process involving geranylation of 2-thiouridine (S2U) to S-geranyl-2-thiouridine (geS2U) and subsequent selenation of the latter derivative to 2-selenouridine (Se2U) in the tRNA chain. The protein is tRNA 2-selenouridine synthase of Pseudomonas savastanoi pv. phaseolicola (strain 1448A / Race 6) (Pseudomonas syringae pv. phaseolicola (strain 1448A / Race 6)).